Here is a 358-residue protein sequence, read N- to C-terminus: Phenylalanine--tRNA ligase alpha subunit (358 aa).

Glu-258 lines the Mg(2+) pocket.

The protein belongs to the class-II aminoacyl-tRNA synthetase family. Phe-tRNA synthetase alpha subunit type 1 subfamily. As to quaternary structure, tetramer of two alpha and two beta subunits. Mg(2+) serves as cofactor.

Its subcellular location is the cytoplasm. It catalyses the reaction tRNA(Phe) + L-phenylalanine + ATP = L-phenylalanyl-tRNA(Phe) + AMP + diphosphate + H(+). The protein is Phenylalanine--tRNA ligase alpha subunit of Rhodospirillum centenum (strain ATCC 51521 / SW).